The following is a 68-amino-acid chain: Large ribosomal subunit protein uL29 (68 aa).

It belongs to the universal ribosomal protein uL29 family.

This is Large ribosomal subunit protein uL29 from Methanobrevibacter smithii (strain ATCC 35061 / DSM 861 / OCM 144 / PS).